The chain runs to 2883 residues: Bifunctional DNA-directed RNA polymerase subunit beta-beta' (2883 aa).

A DNA-directed RNA polymerase subunit beta region spans residues 1–1377 (MPTTLKSGNR…DVTVYGETEE (1377 aa)). The tract at residues 1382 to 2883 (PMPIKEDDRP…IRIKEKTEGA (1502 aa)) is DNA-directed RNA polymerase subunit beta'. Zn(2+) is bound by residues Cys-1447, Cys-1449, Cys-1462, and Cys-1465. The Mg(2+) site is built by Asp-1846, Asp-1848, and Asp-1850. Positions 2176, 2250, 2257, and 2260 each coordinate Zn(2+).

This sequence in the N-terminal section; belongs to the RNA polymerase beta chain family. In the C-terminal section; belongs to the RNA polymerase beta' chain family. In terms of assembly, the RNAP catalytic core consists of 2 alpha, 1 beta/beta' and 1 omega subunit. When a sigma factor is associated with the core the holoenzyme is formed, which can initiate transcription. Mg(2+) serves as cofactor. It depends on Zn(2+) as a cofactor.

The enzyme catalyses RNA(n) + a ribonucleoside 5'-triphosphate = RNA(n+1) + diphosphate. In terms of biological role, DNA-dependent RNA polymerase catalyzes the transcription of DNA into RNA using the four ribonucleoside triphosphates as substrates. The protein is Bifunctional DNA-directed RNA polymerase subunit beta-beta' (rpoBC) of Wolinella succinogenes (strain ATCC 29543 / DSM 1740 / CCUG 13145 / JCM 31913 / LMG 7466 / NCTC 11488 / FDC 602W) (Vibrio succinogenes).